A 587-amino-acid chain; its full sequence is Aspartate--tRNA ligase (587 aa).

Glu175 contacts L-aspartate. Residues 199 to 202 (QQFK) form an aspartate region. Positions 221 and 446 each coordinate L-aspartate. 221-223 (RDE) serves as a coordination point for ATP. Glu480 lines the ATP pocket. Position 487 (Arg487) interacts with L-aspartate. 532 to 535 (GVDR) provides a ligand contact to ATP.

Belongs to the class-II aminoacyl-tRNA synthetase family. Type 1 subfamily. As to quaternary structure, homodimer.

It is found in the cytoplasm. The enzyme catalyses tRNA(Asp) + L-aspartate + ATP = L-aspartyl-tRNA(Asp) + AMP + diphosphate. Catalyzes the attachment of L-aspartate to tRNA(Asp) in a two-step reaction: L-aspartate is first activated by ATP to form Asp-AMP and then transferred to the acceptor end of tRNA(Asp). This chain is Aspartate--tRNA ligase, found in Streptomyces avermitilis (strain ATCC 31267 / DSM 46492 / JCM 5070 / NBRC 14893 / NCIMB 12804 / NRRL 8165 / MA-4680).